The following is a 459-amino-acid chain: Trichothecene 3-O-acetyltransferase TRI101 (459 aa).

Asp-218 and Ile-221 together coordinate Ca(2+). CoA-binding positions include Lys-253, 266 to 269 (FVST), Asp-302, Gln-318, and Arg-343. Ca(2+) is bound at residue Asp-376. Residues Ser-386 and Lys-390 each coordinate CoA. Glu-449 serves as a coordination point for Ca(2+).

This sequence belongs to the trichothecene 3-O-acetyltransferase family.

It participates in sesquiterpene biosynthesis; trichothecene biosynthesis. Functionally, 3-O-acetyltransferase involved in the biosynthesis of trichothecenes, a very large family of chemically related bicyclic sesquiterpene compounds acting as mycotoxins, including T2-toxin. The biosynthesis of trichothecenes begins with the cyclization of farnesyl diphosphate to trichodiene and is catalyzed by the trichodiene synthase TRI5. Trichodiene undergoes a series of oxygenations catalyzed by the cytochrome P450 monooxygenase TRI4. TRI4 controls the addition of four oxygens at C-2, C-3, C-11, and the C-12, C-13-epoxide to form the intermediate isotrichotriol. Isotrichotriol then undergoes a non-enzymatic isomerization and cyclization to form isotrichodermol. During this process, the oxygen at the C-2 position becomes the pyran ring oxygen and the hydroxyl group at C-11 is lost. More complex type A trichothecenes are built by modifying isotrichodermol through a series of paired hydroxylation and acetylation or acylation steps. Isotrichodermol is converted to isotrichodermin by the acetyltransferase TRI101. TRI101 encodes a C-3 transacetylase that acts as a self-protection or resistance factor during biosynthesis and that the presence of a free C-3 hydroxyl group is a key component of Fusarium trichothecene phytotoxicity. A second hydroxyl group is added to C-15 by the trichothecene C-15 hydroxylase TRI11, producing 15-decalonectrin, which is then acetylated by TRI3, producing calonectrin. A third hydroxyl group is added at C-4 by the cytochrome P450 monooxygenase TRI13, converting calonectrin to 3,15-diacetoxyspirpenol, which is subsequently acetylated bythe acetyltransferase TRI7. A fourth hydroxyl group is added to C-8 by the cytochrome P450 monooxygenase TRI1, followed by the addition of an isovaleryl moiety by TRI16. Finally, the acetyl group is removed from the C-3 position by the trichothecene C-3 esterase TRI8 to produce T-2 toxin. The sequence is that of Trichothecene 3-O-acetyltransferase TRI101 from Fusarium sporotrichioides.